The primary structure comprises 518 residues: Probable alginate O-acetylase AlgI (518 aa).

The next 8 helical transmembrane spans lie at 2-24 (VFSSNVFLFMFLPIFLGLYYLSG), 39-61 (FYAWWRVDFLALFIGVTVWNYWI), 78-100 (WLLLGVIVDLCILGYFKYANFGV), 115-137 (FILTHVLLPIGISFYVFESISYI), 150-172 (NLIDFAAFVAIFPHLIAGPVLRF), 319-341 (GLWHGANVTYIIWGAWHGMWLAI), 354-373 (FNVIRWALTFLLVVIGWVIF), and 402-424 (ASLTGLQVATLVVAYATLAFFGL). H322 is an active-site residue. The tract at residues 435–456 (SGKSARADGPATEQPGTIKAVP) is disordered. Residues 493 to 515 (LILLLFVASILKLSAQSFSPFLY) traverse the membrane as a helical segment.

This sequence belongs to the membrane-bound acyltransferase family.

The protein localises to the cell inner membrane. The protein operates within glycan biosynthesis; alginate biosynthesis. Together with AlgJ and AlgF, forms an inner membrane complex which probably interacts with the alginate polymerization-transport complex and adds acetyl groups at the O-2 and O-3 positions of mannuronate residues. Acetylation of alginate is important for the architecture of biofilms and increases the ability of alginate to act as a defense barrier. The chain is Probable alginate O-acetylase AlgI (algI) from Pseudomonas syringae pv. tomato (strain ATCC BAA-871 / DC3000).